A 405-amino-acid chain; its full sequence is Dihydrolipoyllysine-residue succinyltransferase component of 2-oxoglutarate dehydrogenase complex (405 aa).

Residues 3-78 (SVDILVPDLP…TSRQILGRLR (76 aa)) enclose the Lipoyl-binding domain. Lys44 is subject to N6-lipoyllysine. The segment at 75–111 (GRLREGNSAGKETSAKSEEKASTPAQRQQASLEEQNN) is disordered. Residues 97-111 (TPAQRQQASLEEQNN) are compositionally biased toward polar residues. Positions 113-150 (ALSPAIRRLLAEHNLDASAIKGTGVGGRLTREDVEKHL) constitute a Peripheral subunit-binding (PSBD) domain. Lys148 carries the post-translational modification N6-acetyllysine. Residues 153–173 (APAKESAPAAAAPAAQPALAA) are compositionally biased toward low complexity. Residues 153-178 (APAKESAPAAAAPAAQPALAARSEKR) form a disordered region. Active-site residues include His376 and Asp380.

This sequence belongs to the 2-oxoacid dehydrogenase family. In terms of assembly, forms a 24-polypeptide structural core with octahedral symmetry. Part of the 2-oxoglutarate dehydrogenase (OGDH) complex composed of E1 (2-oxoglutarate dehydrogenase), E2 (dihydrolipoamide succinyltransferase) and E3 (dihydrolipoamide dehydrogenase); the complex contains multiple copies of the three enzymatic components (E1, E2 and E3). Interacts with SucA (via N-terminus), the E1 component of OGDH complex. Requires (R)-lipoate as cofactor.

The enzyme catalyses N(6)-[(R)-dihydrolipoyl]-L-lysyl-[protein] + succinyl-CoA = N(6)-[(R)-S(8)-succinyldihydrolipoyl]-L-lysyl-[protein] + CoA. Its pathway is amino-acid degradation; L-lysine degradation via saccharopine pathway; glutaryl-CoA from L-lysine: step 6/6. E2 component of the 2-oxoglutarate dehydrogenase (OGDH) complex which catalyzes the second step in the conversion of 2-oxoglutarate to succinyl-CoA and CO(2). The sequence is that of Dihydrolipoyllysine-residue succinyltransferase component of 2-oxoglutarate dehydrogenase complex (sucB) from Escherichia coli O157:H7.